A 399-amino-acid polypeptide reads, in one-letter code: Acetate kinase (399 aa).

Asn-7 is a binding site for Mg(2+). ATP is bound at residue Lys-14. Arg-89 is a substrate binding site. Catalysis depends on Asp-146, which acts as the Proton donor/acceptor. ATP contacts are provided by residues 206-210, 280-282, and 328-332; these read HLGNG, DMR, and GIGEN. Residue Glu-382 coordinates Mg(2+).

The protein belongs to the acetokinase family. Homodimer. Mg(2+) serves as cofactor. The cofactor is Mn(2+).

The protein resides in the cytoplasm. The enzyme catalyses acetate + ATP = acetyl phosphate + ADP. It participates in metabolic intermediate biosynthesis; acetyl-CoA biosynthesis; acetyl-CoA from acetate: step 1/2. Functionally, catalyzes the formation of acetyl phosphate from acetate and ATP. Can also catalyze the reverse reaction. The polypeptide is Acetate kinase (Campylobacter fetus subsp. fetus (strain 82-40)).